We begin with the raw amino-acid sequence, 150 residues long: Large ribosomal subunit protein uL13 (150 aa).

It belongs to the universal ribosomal protein uL13 family. In terms of assembly, part of the 50S ribosomal subunit.

Functionally, this protein is one of the early assembly proteins of the 50S ribosomal subunit, although it is not seen to bind rRNA by itself. It is important during the early stages of 50S assembly. The protein is Large ribosomal subunit protein uL13 of Sulfurihydrogenibium sp. (strain YO3AOP1).